A 320-amino-acid chain; its full sequence is Adhesin MafA 3 (320 aa).

The N-terminal stretch at 1–18 (MQARLLIPILFSVFILSA) is a signal peptide. Residue cysteine 19 is the site of N-palmitoyl cysteine attachment. A lipid anchor (S-diacylglycerol cysteine) is attached at cysteine 19. Positions 288–298 (HTGNSAPSVET) are enriched in polar residues. Residues 288-320 (HTGNSAPSVETDNSHEGYGYSDEVVRQHRQGQP) form a disordered region.

The protein belongs to the MafA family.

It is found in the cell outer membrane. The chain is Adhesin MafA 3 (mafA3) from Neisseria meningitidis serogroup C / serotype 2a (strain ATCC 700532 / DSM 15464 / FAM18).